The chain runs to 634 residues: Phosphatase and actin regulator 2 (634 aa).

Disordered stretches follow at residues 1-32 (MDNA…KRKG), 84-344 (LPDQ…PLED), 412-471 (PQLL…ALAS), and 485-508 (NRPS…ERQE). A lipid anchor (N-myristoyl glycine) is attached at Asp-2. Residues 13–26 (IANSDGPTAGSQTP) show a composition bias toward polar residues. Position 16 is a phosphoserine (Ser-16). Thr-25 is modified (phosphothreonine). The RPEL 1 repeat unit spans residues 60–85 (AVLERKISTRQSREELIRRGVLKELP). Basic and acidic residues-rich tracts occupy residues 108-120 (ESTR…KSEE) and 137-147 (EDKKENTENHS). The segment covering 153–162 (PALPPSAPPK) has biased composition (pro residues). 2 stretches are compositionally biased toward low complexity: residues 231–247 (GSKA…SSRP) and 276–290 (TSHL…GTSD). Residues 291–304 (LKGEPAETRVESFK) are compositionally biased toward basic and acidic residues. Pro residues predominate over residues 324–341 (VPPPPVAPAPSPLAPPLP). Residue Ser-423 is modified to Phosphoserine. Positions 452–464 (TDDEDEDEDEDGS) are enriched in acidic residues. 3 RPEL repeats span residues 477 to 502 (DTLA…QRTS), 515 to 540 (TKLV…KQKN), and 553 to 578 (RRLS…RFNE). Positions 488-508 (SKKELEDKNILQRTSEEERQE) are enriched in basic and acidic residues. 2 positions are modified to phosphoserine: Ser-522 and Ser-560.

The protein belongs to the phosphatase and actin regulator family. Binds PPP1CA and actin.

Its subcellular location is the membrane. The chain is Phosphatase and actin regulator 2 (PHACTR2) from Homo sapiens (Human).